A 189-amino-acid polypeptide reads, in one-letter code: Density-regulated protein homolog (189 aa).

An SUI1 domain is found at 105 to 172; the sequence is ICVSRAARGK…DLFDVIPEKW (68 aa).

This sequence belongs to the DENR family. In terms of assembly, interacts with MCTS1.

Functionally, regulates translation as part of a complex with MCTS1. Specifically required for translational re-initiation in mRNAs containing upstream open reading frames (uORFs). Not required for standard translational initiation. Regulates expression of a subset of gene products including mbc, InR and EcR. This chain is Density-regulated protein homolog, found in Drosophila melanogaster (Fruit fly).